Reading from the N-terminus, the 398-residue chain is MEMSKASKQTTRHEESEHVQNPEPDQILSPRRSLELKQRKWWISVSLCLFLVLLGDSLVMLLLNFFYVQMKQDRREEYDQDLQYKGTWTQALIQNAAFPILIPLFFIFPKPKQHLETNNTSFLSLRLFFLYLSLGVLVAAHSKLFALGKLVSNYGIFSLISTTQLIFTAVLTAIINRFKFTRWIIISILLTIVIYVLGTPDFGGQPHDGEEFGYNIQAWLAFSATIAFSLSLCLIQLGFEKLQVKTKRYGNEKVFRMVLEMQICVAFVASVVCLVGLFASDEYKELKGDSKRFKKGETYYVLSLVGLALSWQVWAVGMIGLVHYVSGLFGDVVHMCASPFVALFVVLAFDFMDDVFSWPRIGALIGTVLALGSYFYTLHKRNKKKMAELNQSENNVEV.

Residues 1 to 26 (MEMSKASKQTTRHEESEHVQNPEPDQ) form a disordered region. Positions 11–20 (TRHEESEHVQ) are enriched in basic and acidic residues. A Phosphoserine modification is found at serine 29. A run of 10 helical transmembrane segments spans residues 43 to 63 (ISVS…MLLL), 88 to 108 (WTQA…FFIF), 127 to 147 (LFFL…LFAL), 155 to 175 (GIFS…TAII), 183 to 203 (WIII…PDFG), 219 to 239 (WLAF…QLGF), 258 to 278 (VLEM…VGLF), 301 to 321 (VLSL…MIGL), 332 to 352 (VVHM…FDFM), and 355 to 375 (VFSW…GSYF).

It belongs to the purine permeases (TC 2.A.7.14) family.

Its subcellular location is the membrane. The protein is Probable purine permease 17 (PUP17) of Arabidopsis thaliana (Mouse-ear cress).